A 644-amino-acid chain; its full sequence is Fidgetin-like protein 2 (644 aa).

Disordered stretches follow at residues 1–36 and 285–323; these read MHWTPEHAQPLNQWPEQHLDVSSTTPSPAHKLELPP and AADGASYPAADDTECRGNGFRSKPPGATEDGTGKYGGGG. Residues 10–27 are compositionally biased toward polar residues; it reads PLNQWPEQHLDVSSTTPS. Residues 285 to 294 are compositionally biased toward low complexity; sequence AADGASYPAA. ATP contacts are provided by residues A390 and 430-435; that span reads GCGKAL.

The protein belongs to the AAA ATPase family. Requires Mg(2+) as cofactor.

The protein resides in the cytoplasm. It is found in the cell cortex. It catalyses the reaction ATP + H2O = ADP + phosphate + H(+). In terms of biological role, microtubule-severing enzyme that negatively regulates cell migration and wound healing. In migrating cells, targets dynamic microtubules (MTs) at the leading edge and severs them, thereby suppressing motility. Microtubule severing releases ARHGEF2 which activates RHOA, which in turn regulates focal ahesion turnover via focal adhesion kinase, as opposed to F-actin polymerization, to suppress cell motility. Negative regulator of axon regeneration that suppresses axonal growth by selectively severing dynamic MTs in the distal axon shaft and growth cone. Contributes to proper cell branching during endothelial and neuronal development. This chain is Fidgetin-like protein 2 (Fignl2), found in Mus musculus (Mouse).